Here is a 354-residue protein sequence, read N- to C-terminus: Probable butyrate kinase (354 aa).

The protein belongs to the acetokinase family.

The protein resides in the cytoplasm. It carries out the reaction butanoate + ATP = butanoyl phosphate + ADP. The sequence is that of Probable butyrate kinase from Phocaeicola vulgatus (strain ATCC 8482 / DSM 1447 / JCM 5826 / CCUG 4940 / NBRC 14291 / NCTC 11154) (Bacteroides vulgatus).